A 103-amino-acid chain; its full sequence is UPF0473 protein SGO_2040 (103 aa).

The protein belongs to the UPF0473 family.

This chain is UPF0473 protein SGO_2040, found in Streptococcus gordonii (strain Challis / ATCC 35105 / BCRC 15272 / CH1 / DL1 / V288).